The following is a 543-amino-acid chain: Acrosin-binding protein (543 aa).

The N-terminal stretch at 1-25 is a signal peptide; it reads MRKPAAGFLPSLLKVLLLPLAPAAA. Positions 26–106 are pro-ACR binding; it reads QDSTQASTPG…ASWFESFCQF (81 aa). A propeptide spans 26–273 (removed in mature form); the sequence is QDSTQASTPG…NPSSFAPRVR (248 aa). The disordered stretch occupies residues 185 to 272; sequence SLGGQEQAPE…SNPSSFAPRV (88 aa). Over residues 192-220 the composition is skewed to basic and acidic residues; it reads APEHKQEQGVEHRQEPTQEHKQEEGQKQE. A compositionally biased stretch (acidic residues) spans 221 to 231; it reads EQEEEQEEEGK. A compositionally biased stretch (basic and acidic residues) spans 232 to 243; it reads QEEGQGTKEGRE. Positions 319–427 are pro-ACR binding; sequence LPHTEALLVL…NQVGSPESGR (109 aa).

In terms of assembly, binds proacrosin (pro-ACR). Does not bind the mature form of ACR. Phosphorylated on Tyr residues in capacitated sperm. Post-translationally, the N-terminus is blocked. In terms of processing, synthesized as a 60-kDa precursor, the 32-kDa mature form is post-translationally produced by the removal of the N-terminal half of the precursor during sperm maturation in the testis and/or epididymis. In terms of tissue distribution, expression restricted to testis in normal tissue. Expressed in a wide spectrum of cancers, including bladder, breast, liver, lung and colon cancers.

It localises to the secreted. Its subcellular location is the cytoplasmic vesicle. It is found in the secretory vesicle. The protein resides in the acrosome. Functionally, acrosomal protein that maintains proacrosin (pro-ACR) as an enzymatically inactive zymogen in the acrosome. Involved also in the acrosome formation. The polypeptide is Acrosin-binding protein (Homo sapiens (Human)).